A 188-amino-acid polypeptide reads, in one-letter code: Elongation factor P (188 aa).

At Lys34 the chain carries N6-(3,6-diaminohexanoyl)-5-hydroxylysine.

The protein belongs to the elongation factor P family. In terms of processing, is beta-lysylated on the epsilon-amino group of Lys-34 by the combined action of EpmA and EpmB, and then hydroxylated on the C5 position of the same residue by EpmC. Lysylation is critical for the stimulatory effect of EF-P on peptide-bond formation. The lysylation moiety would extend toward the peptidyltransferase center and stabilize the terminal 3-CCA end of the tRNA. The hydroxylation of the C5 position on Lys-34 would allow additional potential stabilizing hydrogen-bond interactions with the P-tRNA.

It is found in the cytoplasm. It participates in protein biosynthesis; polypeptide chain elongation. Involved in peptide bond synthesis. Alleviates ribosome stalling that occurs when 3 or more consecutive Pro residues or the sequence PPG is present in a protein, possibly by augmenting the peptidyl transferase activity of the ribosome. Modification of Lys-34 is required for alleviation. This chain is Elongation factor P, found in Salmonella arizonae (strain ATCC BAA-731 / CDC346-86 / RSK2980).